Here is an 87-residue protein sequence, read N- to C-terminus: U3-theraphotoxin-Hhn1n (87 aa).

A signal peptide spans 1–24; that stretch reads MVNMKASMFLTFAGLVLLFVVCYA. The propeptide occupies 25-52; that stretch reads SESEEKEFPKEMLSSIFAVDNDFKQEER. Disulfide bonds link Cys54–Cys67, Cys61–Cys72, and Cys66–Cys79.

The protein belongs to the neurotoxin 10 (Hwtx-1) family. 51 (Hntx-8) subfamily. Hntx-8 sub-subfamily. In terms of tissue distribution, expressed by the venom gland.

Its subcellular location is the secreted. Functionally, weakly inhibits Kv11.1/KCNH2/ERG1, Kv1.2/KCNA2, Kv1.3/KCNA3, and Kv2.1/KCNB1. The chain is U3-theraphotoxin-Hhn1n from Cyriopagopus hainanus (Chinese bird spider).